The chain runs to 199 residues: Neurotrophic factor BDNF precursor form (199 aa).

Positions 1–23 are disordered; sequence GQGSLAYPGLRTQGNLETLSGPN. The propeptide occupies 1-100; that stretch reads GQGSLAYPGL…AANMSMRVRR (100 aa). Positions 12-23 are enriched in polar residues; sequence TQGNLETLSGPN. A glycan (N-linked (GlcNAc...) asparagine) is linked at N93. Residues C113 and C180 are joined by a disulfide bond.

The protein belongs to the NGF-beta family.

It is found in the secreted. Promotes the survival of neuronal populations that are all located either in the central nervous system or directly connected to it. This chain is Neurotrophic factor BDNF precursor form (BDNF), found in Morelia spilota (Carpet python).